We begin with the raw amino-acid sequence, 143 residues long: Nucleoside diphosphate kinase (143 aa).

Lys-11, Phe-59, Arg-87, Thr-93, Arg-104, and Asn-114 together coordinate ATP. His-117 (pros-phosphohistidine intermediate) is an active-site residue.

Belongs to the NDK family. Homotetramer. Mg(2+) is required as a cofactor.

Its subcellular location is the cytoplasm. It catalyses the reaction a 2'-deoxyribonucleoside 5'-diphosphate + ATP = a 2'-deoxyribonucleoside 5'-triphosphate + ADP. The enzyme catalyses a ribonucleoside 5'-diphosphate + ATP = a ribonucleoside 5'-triphosphate + ADP. Its function is as follows. Major role in the synthesis of nucleoside triphosphates other than ATP. The ATP gamma phosphate is transferred to the NDP beta phosphate via a ping-pong mechanism, using a phosphorylated active-site intermediate. In Shewanella sp. (strain ANA-3), this protein is Nucleoside diphosphate kinase.